We begin with the raw amino-acid sequence, 186 residues long: Peptidyl-tRNA hydrolase (186 aa).

Tyr14 serves as a coordination point for tRNA. Catalysis depends on His19, which acts as the Proton acceptor. TRNA contacts are provided by Tyr64, Asn66, and Asn112.

This sequence belongs to the PTH family. Monomer.

Its subcellular location is the cytoplasm. It catalyses the reaction an N-acyl-L-alpha-aminoacyl-tRNA + H2O = an N-acyl-L-amino acid + a tRNA + H(+). Hydrolyzes ribosome-free peptidyl-tRNAs (with 1 or more amino acids incorporated), which drop off the ribosome during protein synthesis, or as a result of ribosome stalling. In terms of biological role, catalyzes the release of premature peptidyl moieties from peptidyl-tRNA molecules trapped in stalled 50S ribosomal subunits, and thus maintains levels of free tRNAs and 50S ribosomes. The chain is Peptidyl-tRNA hydrolase from Bacillus cereus (strain ATCC 10987 / NRS 248).